The chain runs to 724 residues: Semaphorin-2A (724 aa).

An N-terminal signal peptide occupies residues 1–25 (MSLLQLSPLLALLLLLCSSVSETAA). One can recognise a Sema domain in the interval 45 to 522 (QGNNNYGKHG…TDHRIKQIDL (478 aa)). N-linked (GlcNAc...) asparagine glycosylation is present at Asn95. Residues Cys118 and Cys129 are joined by a disulfide bond. N-linked (GlcNAc...) asparagine glycosylation is found at Asn163, Asn190, Asn229, and Asn314. Cystine bridges form between Cys291-Cys399 and Cys315-Cys358. An N-linked (GlcNAc...) asparagine glycan is attached at Asn401. 2 disulfides stabilise this stretch: Cys525–Cys541 and Cys535–Cys550. In terms of domain architecture, Ig-like C2-type spans 552–663 (PYELDLLQDV…LCSYNITVDA (112 aa)). Residue Asn563 is glycosylated (N-linked (GlcNAc...) asparagine). Cys590 and Cys647 are oxidised to a cystine. N-linked (GlcNAc...) asparagine glycosylation is found at Asn658, Asn670, and Asn708.

Belongs to the semaphorin family. As to quaternary structure, interacts with PlexB. Transiently expressed by a single large muscle during motoneuron outgrowth and synapse formation.

It localises to the secreted. In terms of biological role, ligand for transmembrane receptor PlexB. Plays a role in growth cone guidance. Required for both proper adult behavior and survival. Can function as a selective target-derived signal that inhibits the formation of specific synaptic terminal arbors. Function in neurons is essential for adult survival, motor neuron survival, and is important for climbing behavior and activity. During embryogenesis, plays an important role in correct salivary gland positioning. The sequence is that of Semaphorin-2A from Drosophila melanogaster (Fruit fly).